The primary structure comprises 315 residues: beta-hydroxyaspartate dehydratase (315 aa).

Residue Lys-53 is modified to N6-(pyridoxal phosphate)lysine. Residues Asn-80, 179-183, and Thr-303 each bind pyridoxal 5'-phosphate; that span reads GGGGM.

Pyridoxal 5'-phosphate is required as a cofactor.

The catalysed reaction is (3S)-3-hydroxy-D-aspartate = iminosuccinate + H2O. Functionally, catalyzes the dehydration of (2R,3S)-beta-hydroxyaspartate ((3S)-3-hydroxy-D-aspartate) into iminosuccinate. Is essential for the growth of P.denitrificans in the presence of glycolate and glyoxylate since it functions in glyoxylate assimilation via the beta-hydroxyaspartate cycle (BHAC). The polypeptide is beta-hydroxyaspartate dehydratase (Paracoccus denitrificans (strain Pd 1222)).